A 201-amino-acid chain; its full sequence is Adenylyl-sulfate kinase (201 aa).

35–42 contributes to the ATP binding site; sequence GLSGSGKS. The active-site Phosphoserine intermediate is serine 109.

It belongs to the APS kinase family.

It carries out the reaction adenosine 5'-phosphosulfate + ATP = 3'-phosphoadenylyl sulfate + ADP + H(+). Its pathway is sulfur metabolism; hydrogen sulfide biosynthesis; sulfite from sulfate: step 2/3. Its function is as follows. Catalyzes the synthesis of activated sulfate. In Prochlorococcus marinus (strain SARG / CCMP1375 / SS120), this protein is Adenylyl-sulfate kinase.